The chain runs to 494 residues: UDP-N-acetylmuramoyl-L-alanyl-D-glutamate--2,6-diaminopimelate ligase (494 aa).

Serine 30 lines the UDP-N-acetyl-alpha-D-muramoyl-L-alanyl-D-glutamate pocket. Residue 110–116 (GTNGKTS) coordinates ATP. UDP-N-acetyl-alpha-D-muramoyl-L-alanyl-D-glutamate-binding positions include 152-153 (TT), serine 179, and arginine 187. The residue at position 219 (lysine 219) is an N6-carboxylysine. Meso-2,6-diaminopimelate contacts are provided by residues arginine 380, 404 to 407 (DNPR), glycine 456, and glutamate 460. The Meso-diaminopimelate recognition motif motif lies at 404–407 (DNPR).

The protein belongs to the MurCDEF family. MurE subfamily. It depends on Mg(2+) as a cofactor. Carboxylation is probably crucial for Mg(2+) binding and, consequently, for the gamma-phosphate positioning of ATP.

Its subcellular location is the cytoplasm. It catalyses the reaction UDP-N-acetyl-alpha-D-muramoyl-L-alanyl-D-glutamate + meso-2,6-diaminopimelate + ATP = UDP-N-acetyl-alpha-D-muramoyl-L-alanyl-gamma-D-glutamyl-meso-2,6-diaminopimelate + ADP + phosphate + H(+). It functions in the pathway cell wall biogenesis; peptidoglycan biosynthesis. Its function is as follows. Catalyzes the addition of meso-diaminopimelic acid to the nucleotide precursor UDP-N-acetylmuramoyl-L-alanyl-D-glutamate (UMAG) in the biosynthesis of bacterial cell-wall peptidoglycan. In Alkaliphilus metalliredigens (strain QYMF), this protein is UDP-N-acetylmuramoyl-L-alanyl-D-glutamate--2,6-diaminopimelate ligase.